A 384-amino-acid chain; its full sequence is Spermidine/putrescine import ATP-binding protein PotA (384 aa).

The ABC transporter domain occupies 6-238; sequence IAFQNVSKVF…PINHFVATFI (233 aa). Residue 40 to 47 participates in ATP binding; that stretch reads GASGSGKS.

Belongs to the ABC transporter superfamily. Spermidine/putrescine importer (TC 3.A.1.11.1) family. In terms of assembly, the complex is composed of two ATP-binding proteins (PotA), two transmembrane proteins (PotB and PotC) and a solute-binding protein (PotD).

The protein resides in the cell membrane. The catalysed reaction is ATP + H2O + polyamine-[polyamine-binding protein]Side 1 = ADP + phosphate + polyamineSide 2 + [polyamine-binding protein]Side 1.. Its function is as follows. Part of the ABC transporter complex PotABCD involved in spermidine/putrescine import. Responsible for energy coupling to the transport system. This Streptococcus thermophilus (strain ATCC BAA-250 / LMG 18311) protein is Spermidine/putrescine import ATP-binding protein PotA.